The following is a 718-amino-acid chain: Tegument protein UL46 (718 aa).

Disordered regions lie at residues 433–510 and 581–611; these read SAGP…EPPA and TADD…DDES. Positions 444-454 are enriched in gly residues; the sequence is GPGGHRAGGGT. Residues 455–467 are compositionally biased toward basic and acidic residues; the sequence is CREKIQRARRDNE.

This sequence belongs to the herpesviridae HHV-1 VP11/12 protein family. As to quaternary structure, interacts with VP16. Interacts with host LCK, PIK3R1, SHC1 AND GRB2; these interactions promote the activation of the PI3K/AKT pathway. Interacts with host YWHAB. Interacts with ICP0; this interaction targets UL46 for degradation by the proteasome. Interacts (via N-terminus) with host TMEM173. Interacts (via C-terminus) with host TBK1. Interacts with host DOK2. Post-translationally, phosphorylated by host LCK. The phosphorylation seems to be lymphocyte-specific.

Its subcellular location is the virion tegument. The protein localises to the host cytoplasm. It localises to the host cell membrane. Its function is as follows. Plays a role in the activation of the host PI3K/AKT pathway to promote cell survival. Interacts with and activates host LCK and thereby recruits downstream partners SHC1, GRB2 and PI3KR1 in order to activate the PI3K pathway by phosphorylating host AKT on its activating residues. This mechanism is inhibited by the viral protein US3 that instead promotes incorporation of UL46 into virions. Plays a role in the inhibition of TMEM173/STING-mediated type I interferon production. Interacts with host DOK2 and induces its degradation. This immune evasion mechanism to inactivate T-cells may play an important role during pathogenesis. The sequence is that of Tegument protein UL46 from Homo sapiens (Human).